The following is a 394-amino-acid chain: Elongation factor Tu (394 aa).

One can recognise a tr-type G domain in the interval 10 to 204 (KPHVNVGTIG…YLDSYIPEPE (195 aa)). A G1 region spans residues 19 to 26 (GHVDHGKT). 19–26 (GHVDHGKT) serves as a coordination point for GTP. T26 is a Mg(2+) binding site. Residues 60–64 (GITIN) are G2. The tract at residues 81-84 (DCPG) is G3. GTP is bound by residues 81-85 (DCPGH) and 136-139 (NKCD). Residues 136–139 (NKCD) form a G4 region. The segment at 174–176 (SAL) is G5.

Belongs to the TRAFAC class translation factor GTPase superfamily. Classic translation factor GTPase family. EF-Tu/EF-1A subfamily. Monomer.

It localises to the cytoplasm. The enzyme catalyses GTP + H2O = GDP + phosphate + H(+). In terms of biological role, GTP hydrolase that promotes the GTP-dependent binding of aminoacyl-tRNA to the A-site of ribosomes during protein biosynthesis. This chain is Elongation factor Tu, found in Pectobacterium atrosepticum (strain SCRI 1043 / ATCC BAA-672) (Erwinia carotovora subsp. atroseptica).